The chain runs to 477 residues: Argininosuccinate lyase (477 aa).

The protein belongs to the lyase 1 family. Argininosuccinate lyase subfamily.

It is found in the cytoplasm. It carries out the reaction 2-(N(omega)-L-arginino)succinate = fumarate + L-arginine. It participates in amino-acid biosynthesis; L-arginine biosynthesis; L-arginine from L-ornithine and carbamoyl phosphate: step 3/3. The polypeptide is Argininosuccinate lyase (Acinetobacter baumannii (strain ACICU)).